A 40-amino-acid polypeptide reads, in one-letter code: Chitin-binding protein 4 (40 aa).

Post-translationally, N-glycosylated.

Its function is as follows. Chitin-binding protein. Has antifungal activity against C.krusei, C.albicans, C.tropicalis and C.parapsilosis. Has antinociceptive and anti-inflammatory activity in mice. In Moringa oleifera (Horseradish tree), this protein is Chitin-binding protein 4.